The primary structure comprises 545 residues: Membrane protein insertase YidC (545 aa).

The chain crosses the membrane as a helical span at residues 6–26 (NILLIGLLFVSFLLWQQWQAD). The interval 44 to 65 (STVADAHSSDVPDADSAVPEAT) is disordered. 4 helical membrane-spanning segments follow: residues 346–366 (LLMF…LITL), 424–444 (GGCL…WVLL), 461–481 (LSVQ…MFVM), and 504–524 (VIFT…WLVG).

This sequence belongs to the OXA1/ALB3/YidC family. Type 1 subfamily. In terms of assembly, interacts with the Sec translocase complex via SecD. Specifically interacts with transmembrane segments of nascent integral membrane proteins during membrane integration.

The protein localises to the cell inner membrane. Required for the insertion and/or proper folding and/or complex formation of integral membrane proteins into the membrane. Involved in integration of membrane proteins that insert both dependently and independently of the Sec translocase complex, as well as at least some lipoproteins. Aids folding of multispanning membrane proteins. The sequence is that of Membrane protein insertase YidC from Shewanella pealeana (strain ATCC 700345 / ANG-SQ1).